The primary structure comprises 398 residues: Putative F-box protein At4g17780 (398 aa).

The F-box domain maps to 8–55; the sequence is PSSIYIVADLLEDIFLRLPLKSILISKSVSKRWRSILESKTFVERRMS.

The protein is Putative F-box protein At4g17780 of Arabidopsis thaliana (Mouse-ear cress).